The primary structure comprises 287 residues: Protein TMEPAI (287 aa).

Residues 1-40 are Lumenal-facing; it reads MHRLMGVNSTAAAAAGQPNVSCTCNCKRSLFQSMEITELE. A helical transmembrane segment spans residues 41-63; the sequence is FVQIIIIVVVMMVMVVVITCLLS. Residues 64–287 are Cytoplasmic-facing; it reads HYKLSARSFI…EKDKQKGHPL (224 aa). Positions 158 to 161 match the PPxY motif 1 motif; the sequence is PPPY. Positions 186-189 match the SMAD interaction motif (SIM) motif; that stretch reads PPNR. The PPxY motif 2 signature appears at 229–232; sequence PPTY. The segment at 239-258 is disordered; that stretch reads YPGSSFQHQQSSGPPSLLEG. The span at 242 to 252 shows a compositional bias: polar residues; it reads SSFQHQQSSGP.

This sequence belongs to the PMEPA1 family. Interacts with NEDD4 (via PPxY motifs). Interacts with AR. Interacts with LDLRAD4. Interacts (via the SMAD interaction motif) with SMAD2 and SMAD3. In terms of tissue distribution, highest expression in prostate. Also expressed in ovary.

The protein resides in the early endosome membrane. The protein localises to the golgi apparatus membrane. Functions as a negative regulator of TGF-beta signaling and thereby probably plays a role in cell proliferation, differentiation, apoptosis, motility, extracellular matrix production and immunosuppression. In the canonical TGF-beta pathway, ZFYVE9/SARA recruits the intracellular signal transducer and transcriptional modulators SMAD2 and SMAD3 to the TGF-beta receptor. Phosphorylated by the receptor, SMAD2 and SMAD3 then form a heteromeric complex with SMAD4 that translocates to the nucleus to regulate transcription. Through interaction with SMAD2 and SMAD3, LDLRAD4 may compete with ZFYVE9 and SMAD4 and prevent propagation of the intracellular signal. Also involved in down-regulation of the androgen receptor (AR), enhancing ubiquitination and proteasome-mediated degradation of AR, probably by recruiting NEDD4. This is Protein TMEPAI (PMEPA1) from Homo sapiens (Human).